Consider the following 1450-residue polypeptide: Auxilin-like protein 1 (1450 aa).

Disordered stretches follow at residues 117-142, 241-318, 357-383, 459-480, 512-541, 556-575, 908-946, 961-1046, 1077-1168, 1192-1241, and 1254-1328; these read NEDK…GKKS, STRD…AESS, DSKI…SQIL, NSKQ…TKQE, SQKD…SQEM, EETP…EKSE, DRSE…RSSF, EQHR…ELEH, GAAT…ERKQ, AGKT…AERA, and AMEK…SDRA. The stretch at 316–344 forms a coiled coil; it reads ESSAALKKAIEEAQIRMNIAKQMMEKKKS. The span at 357–366 shows a compositional bias: basic and acidic residues; that stretch reads DSKIENKGNT. Composition is skewed to basic and acidic residues over residues 512–524, 564–575, 908–923, 1037–1046, 1117–1131, 1147–1168, and 1192–1226; these read SQKD…EKEN, SKSEMNIEEKSE, DRSE…RFDQ, RNGDKKELEH, NMKE…RSSM, ETVE…ERKQ, and AGKT…KLSS. Coiled coils occupy residues 1142–1184 and 1219–1257; these read SQNK…RERA and EVND…AMEK. Over residues 1270-1299 the composition is skewed to low complexity; that stretch reads SYGGSKSFSSSGERRGSSSSGTENKSSGPS. Residues 1310-1328 are compositionally biased toward basic and acidic residues; sequence PIQRCKARSERHQRTSDRA. The stretch at 1327 to 1355 forms a coiled coil; it reads RAAEALAEKKLRDLKTQKEQTERNRLAEA. The region spanning 1377 to 1450 is the J domain; that stretch reads TLQYILGAES…AWNKFGADER (74 aa).

This is Auxilin-like protein 1 (AUL1) from Arabidopsis thaliana (Mouse-ear cress).